The following is a 409-amino-acid chain: Histidine--tRNA ligase (409 aa).

Belongs to the class-II aminoacyl-tRNA synthetase family.

The protein localises to the cytoplasm. It carries out the reaction tRNA(His) + L-histidine + ATP = L-histidyl-tRNA(His) + AMP + diphosphate + H(+). This is Histidine--tRNA ligase (hisS) from Archaeoglobus fulgidus (strain ATCC 49558 / DSM 4304 / JCM 9628 / NBRC 100126 / VC-16).